Consider the following 398-residue polypeptide: Ureide permease 2 (398 aa).

At 1–10 the chain is on the extracellular side; sequence MYLVESKGGA. Residues 11 to 31 traverse the membrane as a helical segment; it reads IACMLLALLSLGTWPAVLTLL. The Cytoplasmic portion of the chain corresponds to 32–44; sequence ERRGRLPQHTYLD. The chain crosses the membrane as a helical span at residues 45 to 65; sequence YSITNLLAAIIIAFTFGQIGS. Residues 66–81 lie on the Extracellular side of the membrane; sequence TKPDSPNFITQLAQDN. Residues 82–102 form a helical membrane-spanning segment; sequence WPSVMFAMAGGIVLSLGNLST. At 103 to 104 the chain is on the cytoplasmic side; the sequence is QY. The chain crosses the membrane as a helical span at residues 105–125; the sequence is AWALVGLSVTEVITSSITVVI. Residues 126–139 lie on the Extracellular side of the membrane; it reads GSTLNYFLDDKINK. Residues 140 to 160 form a helical membrane-spanning segment; the sequence is AEILFPGVACFLIAVCLGSAV. Residues 161–229 are Cytoplasmic-facing; that stretch reads HRSNADDNKA…RAIKVFGKRK (69 aa). The interval 176 to 200 is disordered; sequence ETAKQEASGPSTEIGTNSSKDLETN. The span at 183-200 shows a compositional bias: polar residues; sequence SGPSTEIGTNSSKDLETN. Residue 221–228 coordinates ATP; sequence AIKVFGKR. A helical membrane pass occupies residues 230–250; that stretch reads IIGLAITFFAGLCFSLFSPAF. At 251-272 the chain is on the extracellular side; it reads NLATNDQWNRLKQGVPKLVVYT. The chain crosses the membrane as a helical span at residues 273 to 293; it reads AFFYFSVSCFIIALILNVVFL. Residues 294–315 lie on the Cytoplasmic side of the membrane; sequence YYPVLGLPKSSFKAYLNDWNGR. A helical membrane pass occupies residues 316–336; sequence YWAFLAGFLCGFGNGLQFMGG. Residues 337-341 are Extracellular-facing; the sequence is QAAGY. Residues 342 to 362 form a helical membrane-spanning segment; sequence AAADSVQALPLVSTFWGVVLF. Residues 363–371 are Cytoplasmic-facing; sequence GEYRRSSRK. A helical membrane pass occupies residues 372–392; that stretch reads TYLLLFCMLFMFISAVAVLMA. Topologically, residues 393–398 are extracellular; the sequence is SSGHRK.

Belongs to the plant ureide permease (TC 2.A.7.19) family. Expressed in root xylem, cotyledons and leaves. Expressed in leaf blades, petioles, trichomes, stems, flower stigma, the upper part of pedicels, sepals, and the top and bottom parts of carpels in siliques.

The protein localises to the membrane. Functionally, proton-coupled transporter that transports a wide spectrum of oxo derivatives of heterocyclic nitrogen compounds, including allantoin, uric acid and xanthine, but not adenine. Mediates high affinity transport of uracil and 5-fluorouracil (a toxic uracil analog). Mediates transport of free pyrimidines and may function during early seedling development in salvage pathways, by the utilization of pyrimidines from seed storage tissue. The sequence is that of Ureide permease 2 from Arabidopsis thaliana (Mouse-ear cress).